A 366-amino-acid polypeptide reads, in one-letter code: Ribosomal RNA large subunit methyltransferase M (366 aa).

Residues Ser188, 221–224, Asp240, Asp260, and Asp277 contribute to the S-adenosyl-L-methionine site; that span reads CPGG. Lys306 functions as the Proton acceptor in the catalytic mechanism.

This sequence belongs to the class I-like SAM-binding methyltransferase superfamily. RNA methyltransferase RlmE family. RlmM subfamily. In terms of assembly, monomer.

It is found in the cytoplasm. The enzyme catalyses cytidine(2498) in 23S rRNA + S-adenosyl-L-methionine = 2'-O-methylcytidine(2498) in 23S rRNA + S-adenosyl-L-homocysteine + H(+). Catalyzes the 2'-O-methylation at nucleotide C2498 in 23S rRNA. The protein is Ribosomal RNA large subunit methyltransferase M of Photorhabdus asymbiotica subsp. asymbiotica (strain ATCC 43949 / 3105-77) (Xenorhabdus luminescens (strain 2)).